The chain runs to 188 residues: Molybdopterin synthase catalytic subunit (188 aa).

Residues 1–14 (MATQPPQDQTSTTP) show a composition bias toward low complexity. The disordered stretch occupies residues 1-23 (MATQPPQDQTSTTPSLPPHLDPT). Residues 134–135 (HR), Lys-150, and 157–159 (KRE) contribute to the substrate site.

Belongs to the MoaE family. MOCS2B subfamily. In terms of assembly, heterotetramer; composed of 2 small (MOCS2A) and 2 large (MOCS2B) subunits.

It localises to the cytoplasm. The catalysed reaction is 2 [molybdopterin-synthase sulfur-carrier protein]-C-terminal-Gly-aminoethanethioate + cyclic pyranopterin phosphate + H2O = molybdopterin + 2 [molybdopterin-synthase sulfur-carrier protein]-C-terminal Gly-Gly + 2 H(+). It participates in cofactor biosynthesis; molybdopterin biosynthesis. Catalytic subunit of the molybdopterin synthase complex, a complex that catalyzes the conversion of precursor Z into molybdopterin. Acts by mediating the incorporation of 2 sulfur atoms from thiocarboxylated MOCS2A into precursor Z to generate a dithiolene group. This chain is Molybdopterin synthase catalytic subunit, found in Aspergillus fumigatus (strain ATCC MYA-4609 / CBS 101355 / FGSC A1100 / Af293) (Neosartorya fumigata).